A 690-amino-acid polypeptide reads, in one-letter code: Methionine--tRNA ligase 1 (690 aa).

The short motif at 11–21 (PYANGHIHIGH) is the 'HIGH' region element. Zn(2+)-binding residues include C142, C145, C155, and C158. Positions 328–332 (KMSKS) match the 'KMSKS' region motif. Residue K331 coordinates ATP. A tRNA-binding domain is found at 590-690 (DFSKVDLRVA…SGAKPGMRVH (101 aa)).

It belongs to the class-I aminoacyl-tRNA synthetase family. MetG type 1 subfamily. Homodimer. The cofactor is Zn(2+).

The protein localises to the cytoplasm. The enzyme catalyses tRNA(Met) + L-methionine + ATP = L-methionyl-tRNA(Met) + AMP + diphosphate. Functionally, is required not only for elongation of protein synthesis but also for the initiation of all mRNA translation through initiator tRNA(fMet) aminoacylation. The chain is Methionine--tRNA ligase 1 from Sorangium cellulosum (strain So ce56) (Polyangium cellulosum (strain So ce56)).